The chain runs to 96 residues: Small ribosomal subunit protein bS18 (96 aa).

The segment at 1–20 is disordered; sequence MSHGGKRRSGDGGSEGSSYS.

It belongs to the bacterial ribosomal protein bS18 family. Part of the 30S ribosomal subunit. Forms a tight heterodimer with protein bS6.

Functionally, binds as a heterodimer with protein bS6 to the central domain of the 16S rRNA, where it helps stabilize the platform of the 30S subunit. This chain is Small ribosomal subunit protein bS18, found in Anaplasma phagocytophilum (strain HZ).